Reading from the N-terminus, the 311-residue chain is MSSPRHYLQFSDFTAAEYDHVFQRTRWIKEKFKQYEPYHPLFDRTLVMIFEKASTRTRLSFEAGMQQLGGSAIYLNTRDSQLGRGEPVEDAAQVISRMSDLVMIRTFEQDIIERFAAYSRVPVINGLTNEYHPCQILADIYTFIEHRGSIKGKTVAWVGDSNNMCNTWLQAAEVLDFKVRVSTPPGYEVEPTDAGLRGTAHFAQFSDPLEACRGADLVTTDVWTSMGFEAENEARMKAFADWCVDAEMMSVAAPDALFMHCLPAHRGEEVTAEVIDGPQSVVWDEAENRLHVQKALMEYLVLGRVGDEESN.

Carbamoyl phosphate is bound by residues 54-57 (STRT), Q81, R105, and 132-135 (HPCQ). Residues N163, D221, and 225 to 226 (SM) contribute to the L-ornithine site. Carbamoyl phosphate contacts are provided by residues 261 to 262 (CL) and R289.

The protein belongs to the aspartate/ornithine carbamoyltransferase superfamily. OTCase family.

It localises to the cytoplasm. The enzyme catalyses carbamoyl phosphate + L-ornithine = L-citrulline + phosphate + H(+). It functions in the pathway amino-acid degradation; L-arginine degradation via ADI pathway; carbamoyl phosphate from L-arginine: step 2/2. Its function is as follows. Reversibly catalyzes the transfer of the carbamoyl group from carbamoyl phosphate (CP) to the N(epsilon) atom of ornithine (ORN) to produce L-citrulline. The polypeptide is Ornithine carbamoyltransferase (Azoarcus sp. (strain BH72)).